Consider the following 77-residue polypeptide: Neurexophilin-4 (77 aa).

The interval 1 to 77 is v (Cys-rich); the sequence is NCHVEYEKTN…NFQSEHPYFG (77 aa).

This sequence belongs to the neurexophilin family. In terms of processing, may be proteolytically processed at the boundary between the N-terminal non-conserved and the central conserved domain in neuron-like cells.

The protein localises to the secreted. May be signaling molecules that resemble neuropeptides and that act by binding to alpha-neurexins and possibly other receptors. This Macaca mulatta (Rhesus macaque) protein is Neurexophilin-4 (NXPH4).